The primary structure comprises 332 residues: L-lactate dehydrogenase A chain (332 aa).

Residues 29–57 (GMVG…MEDK) and Arg99 contribute to the NAD(+) site. Arg106, Asn138, and Arg169 together coordinate substrate. An NAD(+)-binding site is contributed by Asn138. His193 serves as the catalytic Proton acceptor. Thr248 is a binding site for substrate.

The protein belongs to the LDH/MDH superfamily. LDH family. As to quaternary structure, homotetramer.

Its subcellular location is the cytoplasm. The catalysed reaction is (S)-lactate + NAD(+) = pyruvate + NADH + H(+). It participates in fermentation; pyruvate fermentation to lactate; (S)-lactate from pyruvate: step 1/1. Its function is as follows. Interconverts simultaneously and stereospecifically pyruvate and lactate with concomitant interconversion of NADH and NAD(+). The protein is L-lactate dehydrogenase A chain (ldha) of Sphyraena argentea (Pacific barracuda).